We begin with the raw amino-acid sequence, 700 residues long: Glycine--tRNA ligase beta subunit (700 aa).

Belongs to the class-II aminoacyl-tRNA synthetase family. In terms of assembly, tetramer of two alpha and two beta subunits.

Its subcellular location is the cytoplasm. The catalysed reaction is tRNA(Gly) + glycine + ATP = glycyl-tRNA(Gly) + AMP + diphosphate. The polypeptide is Glycine--tRNA ligase beta subunit (Magnetococcus marinus (strain ATCC BAA-1437 / JCM 17883 / MC-1)).